The following is a 421-amino-acid chain: Trimethyllysine dioxygenase, mitochondrial (421 aa).

The N-terminal 15 residues, 1-15, are a transit peptide targeting the mitochondrion; it reads MWYHKLLHQQSRLQN. N6-acetyllysine occurs at positions 179 and 236. Residues histidine 242, aspartate 244, and histidine 389 each coordinate Fe cation.

This sequence belongs to the gamma-BBH/TMLD family. Homodimer. Fe(2+) is required as a cofactor. L-ascorbate serves as cofactor.

Its subcellular location is the mitochondrion matrix. It carries out the reaction N(6),N(6),N(6)-trimethyl-L-lysine + 2-oxoglutarate + O2 = (3S)-3-hydroxy-N(6),N(6),N(6)-trimethyl-L-lysine + succinate + CO2. The protein operates within amine and polyamine biosynthesis; carnitine biosynthesis. Functionally, converts trimethyllysine (TML) into hydroxytrimethyllysine (HTML). The sequence is that of Trimethyllysine dioxygenase, mitochondrial (Tmlhe) from Rattus norvegicus (Rat).